Reading from the N-terminus, the 601-residue chain is uncharacterized protein (601 aa).

The protein belongs to the chlamydial CPn_1016/CT_858/TC_0248 family.

This is an uncharacterized protein from Chlamydia muridarum (strain MoPn / Nigg).